The primary structure comprises 226 residues: ATP synthase F(0) complex subunit a (226 aa).

6 consecutive transmembrane segments (helical) span residues proline 12 to proline 32, tryptophan 68 to phenylalanine 88, glutamine 97 to leucine 117, isoleucine 138 to valine 158, isoleucine 164 to isoleucine 184, and threonine 189 to isoleucine 209.

Belongs to the ATPase A chain family. Component of the ATP synthase complex composed at least of ATP5F1A/subunit alpha, ATP5F1B/subunit beta, ATP5MC1/subunit c (homooctomer), MT-ATP6/subunit a, MT-ATP8/subunit 8, ATP5ME/subunit e, ATP5MF/subunit f, ATP5MG/subunit g, ATP5MK/subunit k, ATP5MJ/subunit j, ATP5F1C/subunit gamma, ATP5F1D/subunit delta, ATP5F1E/subunit epsilon, ATP5PF/subunit F6, ATP5PB/subunit b, ATP5PD/subunit d, ATP5PO/subunit OSCP. ATP synthase complex consists of a soluble F(1) head domain (subunits alpha(3) and beta(3)) - the catalytic core - and a membrane F(0) domain - the membrane proton channel (subunits c, a, 8, e, f, g, k and j). These two domains are linked by a central stalk (subunits gamma, delta, and epsilon) rotating inside the F1 region and a stationary peripheral stalk (subunits F6, b, d, and OSCP). Interacts with DNAJC30; interaction is direct.

Its subcellular location is the mitochondrion inner membrane. It catalyses the reaction H(+)(in) = H(+)(out). Functionally, subunit a, of the mitochondrial membrane ATP synthase complex (F(1)F(0) ATP synthase or Complex V) that produces ATP from ADP in the presence of a proton gradient across the membrane which is generated by electron transport complexes of the respiratory chain. ATP synthase complex consist of a soluble F(1) head domain - the catalytic core - and a membrane F(1) domain - the membrane proton channel. These two domains are linked by a central stalk rotating inside the F(1) region and a stationary peripheral stalk. During catalysis, ATP synthesis in the catalytic domain of F(1) is coupled via a rotary mechanism of the central stalk subunits to proton translocation. With the subunit c (ATP5MC1), forms the proton-conducting channel in the F(0) domain, that contains two crucial half-channels (inlet and outlet) that facilitate proton movement from the mitochondrial intermembrane space (IMS) into the matrix. Protons are taken up via the inlet half-channel and released through the outlet half-channel, following a Grotthuss mechanism. The chain is ATP synthase F(0) complex subunit a from Pongo pygmaeus (Bornean orangutan).